We begin with the raw amino-acid sequence, 553 residues long: Undecaprenyl phosphate-alpha-4-amino-4-deoxy-L-arabinose arabinosyl transferase 2 (553 aa).

Helical transmembrane passes span 6 to 26 (ASKI…LFPL), 85 to 105 (FAVR…IYLL), 115 to 135 (VAFV…VGTY), 137 to 157 (VLDP…FWAL), 178 to 198 (MAFM…MIPV), 208 to 228 (MLLY…PWVL), 261 to 281 (FWYY…LLPG), 295 to 315 (ELFF…IAKG), 317 to 337 (LPTY…KYGV), 352 to 372 (GYIN…IQLV), 386 to 406 (WVLA…CSTL), and 410 to 430 (HWLW…QAIP).

It belongs to the glycosyltransferase 83 family.

The protein resides in the cell inner membrane. It carries out the reaction 4-amino-4-deoxy-alpha-L-arabinopyranosyl di-trans,octa-cis-undecaprenyl phosphate + lipid IVA = lipid IIA + di-trans,octa-cis-undecaprenyl phosphate.. The protein operates within lipopolysaccharide metabolism; 4-amino-4-deoxy-beta-L-arabinose-lipid A biosynthesis. In terms of biological role, catalyzes the transfer of the L-Ara4N moiety of the glycolipid undecaprenyl phosphate-alpha-L-Ara4N to lipid A. The modified arabinose is attached to lipid A and is required for resistance to polymyxin and cationic antimicrobial peptides. This Proteus mirabilis (strain HI4320) protein is Undecaprenyl phosphate-alpha-4-amino-4-deoxy-L-arabinose arabinosyl transferase 2.